Consider the following 166-residue polypeptide: Prorelaxin H1 (166 aa).

Residues 1-5 form the signal peptide; it reads SRAVA. Cystine bridges form between cysteine 16-cysteine 153, cysteine 28-cysteine 166, and cysteine 152-cysteine 157. A propeptide spans 37–139 (connecting peptide); it reads SLSQEDAPQT…KYLGLDTHSQ (103 aa).

This sequence belongs to the insulin family. Heterodimer of a B chain and an A chain linked by two disulfide bonds. As to expression, expressed in the corpus luteum of pregnancy but not in the placenta.

It localises to the secreted. Relaxin is an ovarian hormone that acts with estrogen to produce dilatation of the birth canal in many mammals. May be involved in remodeling of connective tissues during pregnancy, promoting growth of pubic ligaments and ripening of the cervix. The chain is Prorelaxin H1 (RNL1) from Pan troglodytes (Chimpanzee).